Consider the following 406-residue polypeptide: Olfactomedin-like protein 3 (406 aa).

The signal sequence occupies residues 1 to 21; it reads MGPSAPLLLLFFLSWTGPLQG. Residues 25-101 adopt a coiled-coil conformation; it reads HLVEYMERRL…REVDYLETQN (77 aa). Residues 134-401 enclose the Olfactomedin-like domain; the sequence is DCSYTVAQVR…QIVYKLEMKK (268 aa). A disulfide bridge links C135 with C328. Residues N177 and N248 are each glycosylated (N-linked (GlcNAc...) asparagine).

Belongs to the OLFML3 family.

The protein resides in the secreted. Functionally, secreted scaffold protein that plays an essential role in dorsoventral patterning during early development. Stabilizes axial formation by restricting chordin (CHRD) activity on the dorsal side. Acts by facilitating the association between the tolloid proteases and their substrate chordin (CHRD), leading to enhance chordin (CHRD) degradation. May have matrix-related function involved in placental and embryonic development, or play a similar role in other physiological processes. This chain is Olfactomedin-like protein 3 (Olfml3), found in Mus musculus (Mouse).